Here is a 362-residue protein sequence, read N- to C-terminus: Chorismate synthase (362 aa).

Arg47 is an NADP(+) binding site. Residues 124 to 126 (RAS), Gly286, 301 to 305 (KPTAT), and Arg327 contribute to the FMN site.

This sequence belongs to the chorismate synthase family. In terms of assembly, homotetramer. It depends on FMNH2 as a cofactor.

The catalysed reaction is 5-O-(1-carboxyvinyl)-3-phosphoshikimate = chorismate + phosphate. The protein operates within metabolic intermediate biosynthesis; chorismate biosynthesis; chorismate from D-erythrose 4-phosphate and phosphoenolpyruvate: step 7/7. Catalyzes the anti-1,4-elimination of the C-3 phosphate and the C-6 proR hydrogen from 5-enolpyruvylshikimate-3-phosphate (EPSP) to yield chorismate, which is the branch point compound that serves as the starting substrate for the three terminal pathways of aromatic amino acid biosynthesis. This reaction introduces a second double bond into the aromatic ring system. This Prochlorococcus marinus (strain MIT 9303) protein is Chorismate synthase.